Consider the following 20-residue polypeptide: Conotoxin PnMLKM-D0211 (20 aa).

Residues 1-3 (VKR) constitute a propeptide that is removed on maturation. 3 disulfide bridges follow: C4-C18, C5-C14, and C10-C17. P16 carries the post-translational modification 4-hydroxyproline. At W19 the chain carries Tryptophan amide.

The protein belongs to the conotoxin M superfamily. In terms of tissue distribution, expressed by the venom duct.

The protein resides in the secreted. The protein is Conotoxin PnMLKM-D0211 of Conus pennaceus (Feathered cone).